The chain runs to 351 residues: Glycerol-1-phosphate dehydrogenase [NAD(P)+] (351 aa).

NAD(+) is bound by residues 97-101 (GKVID) and 119-122 (TSPS). Asp124 contributes to the substrate binding site. Ser128 contributes to the NAD(+) binding site. Asp171 serves as a coordination point for substrate. Positions 171 and 251 each coordinate Zn(2+). His255 is a substrate binding site. Position 267 (His267) interacts with Zn(2+).

This sequence belongs to the glycerol-1-phosphate dehydrogenase family. In terms of assembly, homodimer. Zn(2+) serves as cofactor.

The protein resides in the cytoplasm. It carries out the reaction sn-glycerol 1-phosphate + NAD(+) = dihydroxyacetone phosphate + NADH + H(+). The catalysed reaction is sn-glycerol 1-phosphate + NADP(+) = dihydroxyacetone phosphate + NADPH + H(+). It functions in the pathway membrane lipid metabolism; glycerophospholipid metabolism. Catalyzes the NAD(P)H-dependent reduction of dihydroxyacetonephosphate (DHAP or glycerone phosphate) to glycerol 1-phosphate (G1P). The G1P thus generated is used as the glycerophosphate backbone of phospholipids in the cellular membranes of Archaea. This is Glycerol-1-phosphate dehydrogenase [NAD(P)+] from Saccharolobus islandicus (strain Y.N.15.51 / Yellowstone #2) (Sulfolobus islandicus).